The following is a 131-amino-acid chain: MINDIISDSLTRIRNAGMRKLETTKLLHSKVVEALVGIFQAKGYIESFNVIEEDKKKFINVVLKYDEKGKSVINELKRISKPGRRVYKGKDEIKRFKNGYGTIVVSTSHGVLANDEAYKAGVGGEILCTIW.

Belongs to the universal ribosomal protein uS8 family. As to quaternary structure, part of the 30S ribosomal subunit. Contacts proteins S5 and S12.

Functionally, one of the primary rRNA binding proteins, it binds directly to 16S rRNA central domain where it helps coordinate assembly of the platform of the 30S subunit. This chain is Small ribosomal subunit protein uS8, found in Campylobacter jejuni subsp. jejuni serotype O:23/36 (strain 81-176).